The sequence spans 1508 residues: Ras guanine nucleotide exchange factor Y (1508 aa).

Disordered stretches follow at residues 1–73 (MIII…NNNE), 128–182 (KVLS…PKSV), 197–272 (IDNN…YSTS), 396–517 (ILQC…EDED), 565–593 (LSEN…SIPT), 606–727 (LPNI…AEPS), 831–1021 (NVII…SNKE), and 1153–1172 (TNED…TNKN). Composition is skewed to low complexity over residues 9–22 (NINN…NNNS) and 33–72 (NNNN…NNNN). 2 stretches are compositionally biased toward polar residues: residues 128–150 (KVLS…TNTI) and 172–182 (DRTSQDIPKSV). Residues 199-216 (NNTTNNNSNNNNNSSLST) are compositionally biased toward low complexity. Residues 223–232 (DSLETNPIKD) are compositionally biased toward basic and acidic residues. The segment covering 233-250 (EESEESEESEESKEEEEE) has biased composition (acidic residues). A compositionally biased stretch (low complexity) spans 255–272 (IKTTKTTSETIESSYSTS). The segment covering 399–409 (CKDDSSSKDQD) has biased composition (basic and acidic residues). The segment covering 413–447 (NNSAGSSGNSSASNSNRNSIAFSSSNHFSSESSQS) has biased composition (low complexity). A compositionally biased stretch (pro residues) spans 465–475 (PQSPSPSPSPP). Positions 492–510 (FNQQTNFSVSPTKSPSNEK) are enriched in polar residues. Composition is skewed to low complexity over residues 574–593 (NQPS…SIPT), 606–660 (LPNI…LTES), 668–687 (NNNN…NNNN), 831–855 (NVII…NTVK), 862–891 (NKSS…SLTP), 942–984 (SLWS…SPPT), 993–1019 (ITTG…NNSN), and 1160–1172 (SNSN…TNKN). Residues 659–686 (ESLKTRIEENNNNNNNKNINNNNNNNNN) adopt a coiled-coil conformation. One can recognise an N-terminal Ras-GEF domain in the interval 1074-1234 (NRIKVRSASL…IILKIIDRKA (161 aa)). The 231-residue stretch at 1278–1508 (DDLEIARQLT…LYKQSKIIEP (231 aa)) folds into the Ras-GEF domain.

Functionally, promotes the exchange of Ras-bound GDP by GTP. This Dictyostelium discoideum (Social amoeba) protein is Ras guanine nucleotide exchange factor Y (gefY).